A 365-amino-acid chain; its full sequence is Chorismate synthase (365 aa).

NADP(+) is bound at residue Arg-47. FMN-binding positions include 124–126, Gly-287, 302–306, and Arg-328; these read RAS and KPTAT.

Belongs to the chorismate synthase family. In terms of assembly, homotetramer. FMNH2 serves as cofactor.

It catalyses the reaction 5-O-(1-carboxyvinyl)-3-phosphoshikimate = chorismate + phosphate. Its pathway is metabolic intermediate biosynthesis; chorismate biosynthesis; chorismate from D-erythrose 4-phosphate and phosphoenolpyruvate: step 7/7. In terms of biological role, catalyzes the anti-1,4-elimination of the C-3 phosphate and the C-6 proR hydrogen from 5-enolpyruvylshikimate-3-phosphate (EPSP) to yield chorismate, which is the branch point compound that serves as the starting substrate for the three terminal pathways of aromatic amino acid biosynthesis. This reaction introduces a second double bond into the aromatic ring system. The protein is Chorismate synthase of Prochlorococcus marinus (strain MIT 9312).